A 248-amino-acid polypeptide reads, in one-letter code: Leucyl/phenylalanyl-tRNA--protein transferase (248 aa).

Belongs to the L/F-transferase family.

The protein localises to the cytoplasm. The catalysed reaction is N-terminal L-lysyl-[protein] + L-leucyl-tRNA(Leu) = N-terminal L-leucyl-L-lysyl-[protein] + tRNA(Leu) + H(+). It carries out the reaction N-terminal L-arginyl-[protein] + L-leucyl-tRNA(Leu) = N-terminal L-leucyl-L-arginyl-[protein] + tRNA(Leu) + H(+). The enzyme catalyses L-phenylalanyl-tRNA(Phe) + an N-terminal L-alpha-aminoacyl-[protein] = an N-terminal L-phenylalanyl-L-alpha-aminoacyl-[protein] + tRNA(Phe). In terms of biological role, functions in the N-end rule pathway of protein degradation where it conjugates Leu, Phe and, less efficiently, Met from aminoacyl-tRNAs to the N-termini of proteins containing an N-terminal arginine or lysine. This Ralstonia pickettii (strain 12J) protein is Leucyl/phenylalanyl-tRNA--protein transferase.